A 387-amino-acid chain; its full sequence is S-adenosylmethionine synthase (387 aa).

Histidine 15 contacts ATP. Position 17 (aspartate 17) interacts with Mg(2+). Glutamate 43 contributes to the K(+) binding site. Glutamate 56 and glutamine 99 together coordinate L-methionine. Positions 99-109 (QSPDIAQGVNR) are flexible loop. ATP-binding positions include 166–168 (DAK), 232–233 (RF), aspartate 241, 247–248 (RK), alanine 264, and lysine 268. Aspartate 241 provides a ligand contact to L-methionine. Lysine 272 contributes to the L-methionine binding site.

The protein belongs to the AdoMet synthase family. In terms of assembly, homotetramer; dimer of dimers. Mg(2+) is required as a cofactor. K(+) serves as cofactor.

The protein localises to the cytoplasm. It carries out the reaction L-methionine + ATP + H2O = S-adenosyl-L-methionine + phosphate + diphosphate. The protein operates within amino-acid biosynthesis; S-adenosyl-L-methionine biosynthesis; S-adenosyl-L-methionine from L-methionine: step 1/1. Functionally, catalyzes the formation of S-adenosylmethionine (AdoMet) from methionine and ATP. The overall synthetic reaction is composed of two sequential steps, AdoMet formation and the subsequent tripolyphosphate hydrolysis which occurs prior to release of AdoMet from the enzyme. This is S-adenosylmethionine synthase from Nitrosomonas europaea (strain ATCC 19718 / CIP 103999 / KCTC 2705 / NBRC 14298).